Here is a 332-residue protein sequence, read N- to C-terminus: Ferredoxin--NADP reductase (332 aa).

The FAD site is built by Thr20, Glu39, Gln47, Tyr52, Val92, Phe126, Asp288, and Ser329.

This sequence belongs to the ferredoxin--NADP reductase type 2 family. As to quaternary structure, homodimer. It depends on FAD as a cofactor.

The catalysed reaction is 2 reduced [2Fe-2S]-[ferredoxin] + NADP(+) + H(+) = 2 oxidized [2Fe-2S]-[ferredoxin] + NADPH. The chain is Ferredoxin--NADP reductase from Geobacillus thermodenitrificans (strain NG80-2).